We begin with the raw amino-acid sequence, 313 residues long: Methionyl-tRNA formyltransferase (313 aa).

113-116 (SLLP) serves as a coordination point for (6S)-5,6,7,8-tetrahydrofolate.

This sequence belongs to the Fmt family.

It catalyses the reaction L-methionyl-tRNA(fMet) + (6R)-10-formyltetrahydrofolate = N-formyl-L-methionyl-tRNA(fMet) + (6S)-5,6,7,8-tetrahydrofolate + H(+). Attaches a formyl group to the free amino group of methionyl-tRNA(fMet). The formyl group appears to play a dual role in the initiator identity of N-formylmethionyl-tRNA by promoting its recognition by IF2 and preventing the misappropriation of this tRNA by the elongation apparatus. The sequence is that of Methionyl-tRNA formyltransferase from Francisella tularensis subsp. holarctica (strain FTNF002-00 / FTA).